A 974-amino-acid polypeptide reads, in one-letter code: Bifunctional glutamine synthetase adenylyltransferase/adenylyl-removing enzyme (974 aa).

Positions 1–464 are adenylyl removase; the sequence is MKNAFLKTQL…HYAALFENEQ (464 aa). Residues 468-974 are adenylyl transferase; the sequence is LEIGNLVFTG…YSIFKQVMKY (507 aa).

The protein belongs to the GlnE family. Mg(2+) serves as cofactor.

The enzyme catalyses [glutamine synthetase]-O(4)-(5'-adenylyl)-L-tyrosine + phosphate = [glutamine synthetase]-L-tyrosine + ADP. It catalyses the reaction [glutamine synthetase]-L-tyrosine + ATP = [glutamine synthetase]-O(4)-(5'-adenylyl)-L-tyrosine + diphosphate. In terms of biological role, involved in the regulation of glutamine synthetase GlnA, a key enzyme in the process to assimilate ammonia. When cellular nitrogen levels are high, the C-terminal adenylyl transferase (AT) inactivates GlnA by covalent transfer of an adenylyl group from ATP to specific tyrosine residue of GlnA, thus reducing its activity. Conversely, when nitrogen levels are low, the N-terminal adenylyl removase (AR) activates GlnA by removing the adenylyl group by phosphorolysis, increasing its activity. The regulatory region of GlnE binds the signal transduction protein PII (GlnB) which indicates the nitrogen status of the cell. The chain is Bifunctional glutamine synthetase adenylyltransferase/adenylyl-removing enzyme from Bartonella henselae (strain ATCC 49882 / DSM 28221 / CCUG 30454 / Houston 1) (Rochalimaea henselae).